A 122-amino-acid chain; its full sequence is Large ribosomal subunit protein uL14 (122 aa).

The protein belongs to the universal ribosomal protein uL14 family. As to quaternary structure, part of the 50S ribosomal subunit. Forms a cluster with proteins L3 and L19. In the 70S ribosome, L14 and L19 interact and together make contacts with the 16S rRNA in bridges B5 and B8.

Binds to 23S rRNA. Forms part of two intersubunit bridges in the 70S ribosome. This Sphingopyxis alaskensis (strain DSM 13593 / LMG 18877 / RB2256) (Sphingomonas alaskensis) protein is Large ribosomal subunit protein uL14.